Reading from the N-terminus, the 433-residue chain is 23S rRNA (uracil(1939)-C(5))-methyltransferase RlmD (433 aa).

Residues 10–68 (RTTTRQIITVSVNDLDSFGQGVARHNGKTLFIPGLLPQENAEVTVTEDKKQYARAKVVR) enclose the TRAM domain. 2 interaction with RNA regions span residues 23–40 (DLDSFGQGVARHNGKTLF) and 58–63 (KKQYAR). [4Fe-4S] cluster is bound by residues C81, C87, C90, and C162. Residues Q265, F294, N299, E315, N342, and D363 each contribute to the S-adenosyl-L-methionine site. C389 functions as the Nucleophile in the catalytic mechanism.

This sequence belongs to the class I-like SAM-binding methyltransferase superfamily. RNA M5U methyltransferase family. RlmD subfamily.

The enzyme catalyses uridine(1939) in 23S rRNA + S-adenosyl-L-methionine = 5-methyluridine(1939) in 23S rRNA + S-adenosyl-L-homocysteine + H(+). Catalyzes the formation of 5-methyl-uridine at position 1939 (m5U1939) in 23S rRNA. The sequence is that of 23S rRNA (uracil(1939)-C(5))-methyltransferase RlmD from Escherichia coli (strain K12).